The following is a 217-amino-acid chain: Aminopyrimidine aminohydrolase (217 aa).

Residue aspartate 44 coordinates substrate. The active-site Nucleophile is the cysteine 135. Residues tyrosine 139 and tyrosine 165 each contribute to the substrate site. Glutamate 207 serves as the catalytic Proton donor.

Belongs to the TenA family. In terms of assembly, homotetramer.

It catalyses the reaction 4-amino-5-aminomethyl-2-methylpyrimidine + H2O = 4-amino-5-hydroxymethyl-2-methylpyrimidine + NH4(+). The protein operates within cofactor biosynthesis; thiamine diphosphate biosynthesis. In terms of biological role, catalyzes an amino-pyrimidine hydrolysis reaction at the C5' of the pyrimidine moiety of thiamine compounds to give a hydroxymethylpyrimidine (HMP). Displays low activity on 4-amino-5-aminomethyl-2-methylpyrimidine as substrate, indicating that the enzyme may act on a different HMP precursor that may derive from the human stomach food assumption or processing. Is probably involved in thiamine biosynthesis. Does not display thiaminase II activity, as it is unable to hydrolyze thiamine. This is Aminopyrimidine aminohydrolase from Helicobacter pylori (Campylobacter pylori).